Consider the following 243-residue polypeptide: 1-(5-phosphoribosyl)-5-[(5-phosphoribosylamino)methylideneamino] imidazole-4-carboxamide isomerase (243 aa).

Catalysis depends on D8, which acts as the Proton acceptor. The Proton donor role is filled by D130.

This sequence belongs to the HisA/HisF family.

The protein localises to the cytoplasm. It carries out the reaction 1-(5-phospho-beta-D-ribosyl)-5-[(5-phospho-beta-D-ribosylamino)methylideneamino]imidazole-4-carboxamide = 5-[(5-phospho-1-deoxy-D-ribulos-1-ylimino)methylamino]-1-(5-phospho-beta-D-ribosyl)imidazole-4-carboxamide. The protein operates within amino-acid biosynthesis; L-histidine biosynthesis; L-histidine from 5-phospho-alpha-D-ribose 1-diphosphate: step 4/9. In Ruthia magnifica subsp. Calyptogena magnifica, this protein is 1-(5-phosphoribosyl)-5-[(5-phosphoribosylamino)methylideneamino] imidazole-4-carboxamide isomerase.